A 322-amino-acid polypeptide reads, in one-letter code: MVKKVNNPLKIDYQNGIIENRLLQIRNFKDVNTPKLINVWSIRIDPRDSKKVIELIRNDFQKNDPVSLRHLKRIRKDIETSTLEVVLCSKEYICDEGEINNKLKSIWVGTKKYELSDDIEVPEFAPSTKELNNAWSVKYWPLIWNGNPNDQILNDYKIDMQEVRNELSRASTLSVKMATAGKQFPMVSVFVDPSRKKDKVVAEDGRNCENSLPIDHSVMVGIRAVGERLREGVDEDANSYLCLDYDVYLTHEPCSMCSMALIHSRVRRVVFLTEMQRTGSLKLTSGDGYCMNDNKQLNSTYEAFQWIGEEYPVGQVDRDVCC.

In terms of domain architecture, CMP/dCMP-type deaminase spans 162–283; it reads EVRNELSRAS…EMQRTGSLKL (122 aa). Residues histidine 216, cysteine 254, cysteine 257, and cysteine 322 each coordinate Zn(2+).

Belongs to the cytidine and deoxycytidylate deaminase family. ADAT3 subfamily. As to quaternary structure, heterodimer with TAD2.

The protein localises to the cytoplasm. Its subcellular location is the nucleus. The protein resides in the peroxisome. Structural subunit of tRNA-specific adenosine deaminase, which deaminates adenosine-34 (the first, also called wobble position of the anticodon) to inosine in many tRNAs. Inosine-34 allows the decoding of 3 different nucleotides at the third position of mRNA codons, as inosine is able to pair with U, C, and A. In Saccharomyces cerevisiae (strain ATCC 204508 / S288c) (Baker's yeast), this protein is tRNA-specific adenosine deaminase subunit TAD3 (TAD3).